Consider the following 105-residue polypeptide: Small ribosomal subunit protein uS10c (105 aa).

Belongs to the universal ribosomal protein uS10 family. In terms of assembly, part of the 30S ribosomal subunit.

It is found in the plastid. The protein localises to the chloroplast. Involved in the binding of tRNA to the ribosomes. The sequence is that of Small ribosomal subunit protein uS10c from Porphyra purpurea (Red seaweed).